Reading from the N-terminus, the 253-residue chain is Imidazole glycerol phosphate synthase subunit HisF (253 aa).

Active-site residues include aspartate 11 and aspartate 130.

The protein belongs to the HisA/HisF family. Heterodimer of HisH and HisF.

It localises to the cytoplasm. The catalysed reaction is 5-[(5-phospho-1-deoxy-D-ribulos-1-ylimino)methylamino]-1-(5-phospho-beta-D-ribosyl)imidazole-4-carboxamide + L-glutamine = D-erythro-1-(imidazol-4-yl)glycerol 3-phosphate + 5-amino-1-(5-phospho-beta-D-ribosyl)imidazole-4-carboxamide + L-glutamate + H(+). It participates in amino-acid biosynthesis; L-histidine biosynthesis; L-histidine from 5-phospho-alpha-D-ribose 1-diphosphate: step 5/9. In terms of biological role, IGPS catalyzes the conversion of PRFAR and glutamine to IGP, AICAR and glutamate. The HisF subunit catalyzes the cyclization activity that produces IGP and AICAR from PRFAR using the ammonia provided by the HisH subunit. This chain is Imidazole glycerol phosphate synthase subunit HisF, found in Lysinibacillus sphaericus (strain C3-41).